A 61-amino-acid chain; its full sequence is Arabinogalactan protein 15 (61 aa).

Positions 1-22 (MAISKASIVVLMMVIISVVASA) are cleaved as a signal peptide. The residue at position 23 (Gln23) is a Pyrrolidone carboxylic acid. 4-hydroxyproline is present on residues Pro27, Pro29, and Pro31. O-linked (Ara...) hydroxyproline glycosylation is found at Pro27, Pro29, and Pro31. Ser35 carries the GPI-anchor amidated serine lipid modification. The propeptide at 36–61 (SAISASFVSAGVAAVAALVFGSALRI) is removed in mature form.

Belongs to the AG-peptide AGP family. Contains 4-hydroxyproline; hydroxylated on Pro-27, Pro-29 and Pro-31. Post-translationally, O-glycosylated on hydroxyprolines; noncontiguous hydroxylproline residues are glycosylated with arabinogalactan. As to expression, expressed in reproductive tissues. Expressed in chalaza, funiculus, stigma, septum, style, integument and transmitting tract.

The protein localises to the cell membrane. Its function is as follows. Proteoglycan that seems to be implicated in diverse developmental roles such as differentiation, cell-cell recognition, embryogenesis and programmed cell death. The sequence is that of Arabinogalactan protein 15 from Arabidopsis thaliana (Mouse-ear cress).